The chain runs to 332 residues: MLALGKLLDLTLAGREPTEKIQLTADGTRLHWLAEGALEVTPIGARDNGVDLLLSAGIHGNETAPIELLERLIRKVAAGTLKPAARVLFLFGNPEAIRRGERYVEQDMNRLFNGRHEEGSGNEAFRAAELERLAQVFFSKTERVHLHYDLHTAIRGSKIEQFALYPWAEGREHSRSELARLRDAGIEAVLLQNKPGITFSAYTYGQLGAEAFTLELGKARPFGENQEVNLERLERSLELLIDGSEEQPDGSRLDGLKLFSVSREVIKHSDHFRLHLDDDVANFTELSPGYLLAEDIGGTRWVVEEVGARIIFPNPRVKNGLRAGILVVPAKL.

His59, Glu62, and His151 together coordinate Zn(2+). The active site involves Glu215.

It belongs to the AspA/AstE family. Succinylglutamate desuccinylase subfamily. Zn(2+) serves as cofactor.

It catalyses the reaction N-succinyl-L-glutamate + H2O = L-glutamate + succinate. It functions in the pathway amino-acid degradation; L-arginine degradation via AST pathway; L-glutamate and succinate from L-arginine: step 5/5. In terms of biological role, transforms N(2)-succinylglutamate into succinate and glutamate. This is Succinylglutamate desuccinylase from Pseudomonas aeruginosa (strain UCBPP-PA14).